The chain runs to 32 residues: DGSGGASDAQKQHDVNYLLFKVYEDVNDENSP.

The protein belongs to the tyrosinase family. Hemocyanin subfamily. Hemolymph.

The protein localises to the secreted. It localises to the extracellular space. Hemocyanins are copper-containing oxygen carriers occurring freely dissolved in the hemolymph of many mollusks and arthropods. This is Hemocyanin C chain from Cherax destructor (Common yabby crayfish).